Here is a 509-residue protein sequence, read N- to C-terminus: Cytochrome P450 monooxygenase aba1 (509 aa).

The signal sequence occupies residues 1-31; the sequence is MSNSILNLGSFACLLSLGSIVLWYTISAVLA. N402 is a glycosylation site (N-linked (GlcNAc...) asparagine). C451 provides a ligand contact to heme. A glycan (N-linked (GlcNAc...) asparagine) is linked at N462.

The protein belongs to the cytochrome P450 family. Requires heme as cofactor.

The protein operates within hormone biosynthesis. Cytochrome P450 monooxygenase; part of the gene cluster that mediates the biosynthesis of abscisic acid (ABA), a phytohormone that acts antagonistically toward salicylic acid (SA), jasmonic acid (JA) and ethylene (ETH) signaling, to impede plant defense responses. The first step of the pathway catalyzes the reaction from farnesyl diphosphate to alpha-ionylideneethane performed by the alpha-ionylideneethane synthase aba3 via a three-step reaction mechanism involving 2 neutral intermediates, beta-farnesene and allofarnesene. The cytochrome P450 monooxygenase aba1 might then be involved in the conversion of alpha-ionylideneethane to alpha-ionylideneacetic acid. Alpha-ionylideneacetic acid is further converted to abscisic acid in 2 steps involving the cytochrome P450 monooxygenase aba2 and the short-chain dehydrogenase/reductase aba4, via the intermediates 1'-deoxy-ABA or 1',4'-trans-diol-ABA, depending on the order of action of these 2 enzymes. Aba2 is responsible for the hydroxylation of carbon atom C-1' and aba4 might be involved in the oxidation of the C-4' carbon atom. The protein is Cytochrome P450 monooxygenase aba1 (aba1) of Botryotinia fuckeliana (strain B05.10) (Noble rot fungus).